The following is a 413-amino-acid chain: GDP-mannose-dependent alpha-mannosyltransferase (413 aa).

The protein belongs to the glycosyltransferase group 1 family.

Its pathway is phospholipid metabolism; phosphatidylinositol metabolism. In terms of biological role, catalyzes the addition of a mannose residue from GDP-D-mannose to GlcAGroAc2 to generate 1,2-di-O-C16/C18:1-(alpha-D-mannopyranosyl)-(1-4)-(alpha-D-glucopyranosyluronic acid)-(1-3)-glycerol(ManGlcAGroAc2). The sequence is that of GDP-mannose-dependent alpha-mannosyltransferase (mgtA) from Corynebacterium glutamicum (strain ATCC 13032 / DSM 20300 / JCM 1318 / BCRC 11384 / CCUG 27702 / LMG 3730 / NBRC 12168 / NCIMB 10025 / NRRL B-2784 / 534).